The sequence spans 88 residues: Small ribosomal subunit protein bS20 (88 aa).

It belongs to the bacterial ribosomal protein bS20 family.

Its function is as follows. Binds directly to 16S ribosomal RNA. The chain is Small ribosomal subunit protein bS20 from Blochmanniella floridana.